Reading from the N-terminus, the 598-residue chain is MFS siderochrome iron transporter D (598 aa).

A disordered region spans residues 1–34 (MLSSWQKKFFQTPEHPPAEGIAPPRDDGVPNPEP). Residues 1–76 (MLSSWQKKFF…AEAITLTWSK (76 aa)) lie on the Cytoplasmic side of the membrane. Residues 77–97 (ISLGAAYFLMWLLYLVNGFQA) traverse the membrane as a helical segment. Residues 98-115 (SITGNLSAYVTSGFESHS) lie on the Extracellular side of the membrane. Asparagine 102 carries N-linked (GlcNAc...) asparagine glycosylation. Residues 116-136 (LIPVISIVSSVMSAATYMPLA) form a helical membrane-spanning segment. The Cytoplasmic portion of the chain corresponds to 137–144 (KVLNLWDR). A helical membrane pass occupies residues 145–165 (SIGFIIMVAFATLGLILSATC). At 166–171 (HDIGTY) the chain is on the extracellular side. A helical membrane pass occupies residues 172-192 (CAAQVFYSIGFAGIIFSVDVI). Residues 193–203 (TADTSTLRDRG) are Cytoplasmic-facing. The helical transmembrane segment at 204–224 (LAYAFTSSPYIITAFGGPAAA) threads the bilayer. Over 225-233 (EHFYDSNWR) the chain is Extracellular. Residues 234–254 (WAYGCFSIVLPVVALPMFCLL) traverse the membrane as a helical segment. Residues 255–289 (RWNRHKAKKSGLLKDKADSGRTWMESIRHYIIEFD) lie on the Cytoplasmic side of the membrane. A helical membrane pass occupies residues 290–310 (ILGVFFLAAGLVLFLLPFSIA). At 311 to 318 (GSTEDDWK) the chain is on the extracellular side. The helical transmembrane segment at 319–339 (SASIITMLVIGFVCLLVFALV) threads the bilayer. Topologically, residues 340-341 (ER) are cytoplasmic. The chain crosses the membrane as a helical span at residues 342–362 (FVAPVPFLPWALLASRTVLGA). Over 363–396 (CMLDVCYQIAYYCWFNYYTSYLQVVYGTSITTAG) the chain is Extracellular. The chain crosses the membrane as a helical span at residues 397 to 417 (YITSIFDVVSGVWLFIVGFLI). The Cytoplasmic portion of the chain corresponds to 418-424 (KKTNRFR). The helical transmembrane segment at 425-445 (WLLFIAVPLYILGVGLMIYFR) threads the bilayer. Residues 446-450 (KPSWS) are Extracellular-facing. A helical membrane pass occupies residues 451-471 (VGYMIMCQIFIAFAGGTMIIC). The Cytoplasmic portion of the chain corresponds to 472–490 (QQVAVLAASDHDHAASSLA). The helical transmembrane segment at 491–511 (FLNVFGTMGSAVGSSISGAIW) threads the bilayer. Residues 512–562 (THTLPGALQRLLPDSVKADWQTIYDSLEEQLSYERGTLIRQAIALAYASTQ) lie on the Extracellular side of the membrane. A helical membrane pass occupies residues 563–583 (SKMLIAGTAIMALSLVWMFVI). At 584–598 (RDIKLTKTQTKGVLF) the chain is on the cytoplasmic side.

Belongs to the major facilitator superfamily.

The protein resides in the cell membrane. In terms of biological role, major facilitator transporter involved in fusarinine C (FsC) uptake. In contrast to TAFC-mediated iron uptake, FsC-mediated iron uptake via mirD does not play a significant role during infection. The polypeptide is MFS siderochrome iron transporter D (Aspergillus fumigatus (strain ATCC MYA-4609 / CBS 101355 / FGSC A1100 / Af293) (Neosartorya fumigata)).